An 890-amino-acid chain; its full sequence is Possible lysine-specific histone demethylase 1 (890 aa).

Residues M1 to M13 are compositionally biased toward polar residues. Residues M1–V164 are disordered. Residues S24 and S27 each carry the phosphoserine modification. The span at N84 to Q109 shows a compositional bias: polar residues. The span at A110–E122 shows a compositional bias: basic and acidic residues. Residues A123–S138 show a composition bias toward low complexity. The SWIRM domain occupies Q160–I259. An FAD-binding site is contributed by V267 to A295. The tract at residues D860–Q890 is disordered. The segment covering L861–N882 has biased composition (low complexity). Phosphoserine is present on S866.

Belongs to the flavin monoamine oxidase family. In terms of assembly, component of a complex that contains at least HDAC1/Rpd3, CoRest and Su(var)3-3/Hdm. The cofactor is FAD.

It localises to the nucleus. The protein localises to the chromosome. Its function is as follows. Probable histone demethylase that specifically demethylates 'Lys-4' of histone H3, a specific tag for epigenetic transcriptional activation, thereby acting as a corepressor. Required for heterochromatic gene silencing. Acts by oxidizing the substrate by FAD to generate the corresponding imine that is subsequently hydrolyzed. Demethylates both mono- and tri-methylated 'Lys-4' of histone H3. May also demethylate 'Lys-9' of histone H3, Plays a role in the repression of neuronal genes. This Drosophila melanogaster (Fruit fly) protein is Possible lysine-specific histone demethylase 1 (Su(var)3-3).